The chain runs to 302 residues: Lysosomal thioesterase PPT2 (302 aa).

The signal sequence occupies residues 1–27; the sequence is MLGLCGQRLPAAWVLLLLPFLPLLLLA. An N-linked (GlcNAc...) asparagine glycan is attached at N60. 2 disulfide bridges follow: C109-C117 and C165-C176. S111 (nucleophile) is an active-site residue. N190 and N206 each carry an N-linked (GlcNAc...) asparagine glycan. Residue D228 is part of the active site. N245 carries an N-linked (GlcNAc...) asparagine glycan. C276 and C296 are joined by a disulfide. H283 is an active-site residue. N289 carries an N-linked (GlcNAc...) asparagine glycan.

It belongs to the palmitoyl-protein thioesterase family. In terms of tissue distribution, broadly expressed, with highest levels in skeletal muscle.

It localises to the lysosome. The enzyme catalyses hexadecanoyl-CoA + H2O = hexadecanoate + CoA + H(+). It catalyses the reaction S-hexadecanoyl-N-acetylcysteamine + H2O = N-acetylcysteamine + hexadecanoate + H(+). Catalyzes the cleavage of thioester bonds from S-palmitoyl-CoA or S-palmitoyl-N-acetylcysteamine (unbranched structures) but does not have activity against palmitoylcysteine or palmitoylated proteins, branched structures or bulky head groups. Conversely, hydrolyzes both long and short chain fatty acyl-CoA substrate. In terms of biological role, catalytically inactive due to lack of active site His-283. This chain is Lysosomal thioesterase PPT2, found in Homo sapiens (Human).